The chain runs to 166 residues: Small ribosomal subunit protein uS5 (166 aa).

The region spanning 11–74 is the S5 DRBM domain; sequence LQEKLIAVNR…EQAKRNLSKV (64 aa).

The protein belongs to the universal ribosomal protein uS5 family. As to quaternary structure, part of the 30S ribosomal subunit. Contacts proteins S4 and S8.

Its function is as follows. With S4 and S12 plays an important role in translational accuracy. In terms of biological role, located at the back of the 30S subunit body where it stabilizes the conformation of the head with respect to the body. In Aeromonas salmonicida (strain A449), this protein is Small ribosomal subunit protein uS5.